A 168-amino-acid polypeptide reads, in one-letter code: 3-isopropylmalate dehydratase small subunit (168 aa).

It belongs to the LeuD family. LeuD type 2 subfamily. As to quaternary structure, heterodimer of LeuC and LeuD.

The catalysed reaction is (2R,3S)-3-isopropylmalate = (2S)-2-isopropylmalate. The protein operates within amino-acid biosynthesis; L-leucine biosynthesis; L-leucine from 3-methyl-2-oxobutanoate: step 2/4. Functionally, catalyzes the isomerization between 2-isopropylmalate and 3-isopropylmalate, via the formation of 2-isopropylmaleate. This Aquifex aeolicus (strain VF5) protein is 3-isopropylmalate dehydratase small subunit (leuD).